We begin with the raw amino-acid sequence, 326 residues long: Tetraacyldisaccharide 4'-kinase (326 aa).

Residue 53–60 (SVGGNGKT) participates in ATP binding.

This sequence belongs to the LpxK family.

The catalysed reaction is a lipid A disaccharide + ATP = a lipid IVA + ADP + H(+). The protein operates within glycolipid biosynthesis; lipid IV(A) biosynthesis; lipid IV(A) from (3R)-3-hydroxytetradecanoyl-[acyl-carrier-protein] and UDP-N-acetyl-alpha-D-glucosamine: step 6/6. In terms of biological role, transfers the gamma-phosphate of ATP to the 4'-position of a tetraacyldisaccharide 1-phosphate intermediate (termed DS-1-P) to form tetraacyldisaccharide 1,4'-bis-phosphate (lipid IVA). The protein is Tetraacyldisaccharide 4'-kinase of Actinobacillus pleuropneumoniae serotype 7 (strain AP76).